The primary structure comprises 481 residues: Phosphoenolpyruvate phosphatase (481 aa).

A signal peptide spans 1 to 36 (MPIYTSRSCFYLLLFHIILLCSVDKTLCRQTSSFVR). N-linked (GlcNAc...) asparagine glycosylation occurs at Asn109. Positions 168, 195, and 198 each coordinate Fe cation. Residue Asp195 participates in Zn(2+) binding. An N-linked (GlcNAc...) asparagine glycan is attached at Asn206. Zn(2+)-binding residues include Asn232 and His317. Substrate is bound at residue Asn232. His327 serves as the catalytic Proton donor. Position 354 (His354) interacts with Zn(2+). Substrate is bound at residue 354-356 (HVH). Residue His356 participates in Fe cation binding. Residues Asn370 and Asn427 are each glycosylated (N-linked (GlcNAc...) asparagine).

The protein belongs to the metallophosphoesterase superfamily. Purple acid phosphatase family.

The protein resides in the vacuole lumen. The enzyme catalyses phosphoenolpyruvate + H2O = pyruvate + phosphate. Phosphoenolpyruvate phosphatase that probably operates in the vacuole to release phosphate from phosphoenolpyruvate (PEP) under phosphorus starvation. This chain is Phosphoenolpyruvate phosphatase (ACPEPP), found in Allium cepa (Onion).